We begin with the raw amino-acid sequence, 304 residues long: Sperm microtubule inner protein 6 (304 aa).

The protein belongs to the SPMIP6 family. In terms of assembly, microtubule inner protein component of sperm flagellar doublet microtubules. Interacts with alpha-tubulin.

It localises to the cytoplasm. Its subcellular location is the cytoskeleton. The protein localises to the nucleus. It is found in the mitochondrion. The protein resides in the flagellum axoneme. May participate in intramanchette transport and midpiece formation of the sperm tail. May play a potential role in somatic cell proliferation. The protein is Sperm microtubule inner protein 6 (SPMIP6) of Bos taurus (Bovine).